Reading from the N-terminus, the 208-residue chain is Ribosomal RNA large subunit methyltransferase E (208 aa).

Positions 63, 65, 83, 99, and 124 each coordinate S-adenosyl-L-methionine. Lys-164 functions as the Proton acceptor in the catalytic mechanism.

It belongs to the class I-like SAM-binding methyltransferase superfamily. RNA methyltransferase RlmE family.

It localises to the cytoplasm. The catalysed reaction is uridine(2552) in 23S rRNA + S-adenosyl-L-methionine = 2'-O-methyluridine(2552) in 23S rRNA + S-adenosyl-L-homocysteine + H(+). Its function is as follows. Specifically methylates the uridine in position 2552 of 23S rRNA at the 2'-O position of the ribose in the fully assembled 50S ribosomal subunit. This Enterobacter sp. (strain 638) protein is Ribosomal RNA large subunit methyltransferase E.